Consider the following 162-residue polypeptide: Succinate dehydrogenase assembly factor 2, mitochondrial (162 aa).

A mitochondrion-targeting transit peptide spans 1–35 (MHNMFPALTKTLSLQGYKIINSQTGSAAWSCGRRW).

Belongs to the SDHAF2 family. In terms of assembly, interacts with the flavoprotein subunit within the SDH catalytic dimer.

It is found in the mitochondrion matrix. In terms of biological role, plays an essential role in the assembly of succinate dehydrogenase (SDH), an enzyme complex (also referred to as respiratory complex II) that is a component of both the tricarboxylic acid (TCA) cycle and the mitochondrial electron transport chain, and which couples the oxidation of succinate to fumarate with the reduction of ubiquinone (coenzyme Q) to ubiquinol. Required for flavinylation (covalent attachment of FAD) of the flavoprotein subunit of the SDH catalytic dimer. This is Succinate dehydrogenase assembly factor 2, mitochondrial from Saccharomyces cerevisiae (strain RM11-1a) (Baker's yeast).